A 395-amino-acid polypeptide reads, in one-letter code: Receptor-like cytoplasmic kinase 176 (395 aa).

The interval M1 to S45 is disordered. Composition is skewed to low complexity over residues S10–S22 and A29–V39. The Protein kinase domain occupies F70 to L355. ATP is bound by residues L76–V84 and K108. Catalysis depends on D205, which acts as the Proton acceptor. Residues K359–V395 are disordered. The segment covering K369–V395 has biased composition (low complexity).

Belongs to the protein kinase superfamily. Ser/Thr protein kinase family. As to quaternary structure, interacts with CERK1.

It carries out the reaction L-seryl-[protein] + ATP = O-phospho-L-seryl-[protein] + ADP + H(+). It catalyses the reaction L-threonyl-[protein] + ATP = O-phospho-L-threonyl-[protein] + ADP + H(+). Functions downstream of CERK1 in the microbial peptidoglycans (PGNs) and fungal chitin signaling pathways that mediate innate immunity. Participates in the activation of defense genes during response to PGN and chitin. This is Receptor-like cytoplasmic kinase 176 from Oryza sativa subsp. japonica (Rice).